We begin with the raw amino-acid sequence, 94 residues long: Co-chaperonin GroES (94 aa).

Belongs to the GroES chaperonin family. As to quaternary structure, heptamer of 7 subunits arranged in a ring. Interacts with the chaperonin GroEL.

The protein localises to the cytoplasm. Its function is as follows. Together with the chaperonin GroEL, plays an essential role in assisting protein folding. The GroEL-GroES system forms a nano-cage that allows encapsulation of the non-native substrate proteins and provides a physical environment optimized to promote and accelerate protein folding. GroES binds to the apical surface of the GroEL ring, thereby capping the opening of the GroEL channel. This is Co-chaperonin GroES from Streptococcus pneumoniae (strain 70585).